The following is a 521-amino-acid chain: Beta-glucosidase 11 (521 aa).

An N-terminal signal peptide occupies residues 1-23; the sequence is MKLLSNSLMFLPLLALALTAVSS. Residues Q45, H144, and 189–190 each bind a beta-D-glucoside; that span reads NE. The Proton donor role is filled by E190. A disulfide bond links C209 and C217. N-linked (GlcNAc...) asparagine glycosylation is found at N216 and N221. Y356 lines the a beta-D-glucoside pocket. 2 N-linked (GlcNAc...) asparagine glycosylation sites follow: N364 and N388. Positions 422, 466, and 482 each coordinate a beta-D-glucoside. Catalysis depends on E422, which acts as the Nucleophile.

Belongs to the glycosyl hydrolase 1 family.

The catalysed reaction is Hydrolysis of terminal, non-reducing beta-D-glucosyl residues with release of beta-D-glucose.. The protein is Beta-glucosidase 11 of Arabidopsis thaliana (Mouse-ear cress).